The sequence spans 498 residues: ATP synthase subunit beta, chloroplastic (498 aa).

172 to 179 provides a ligand contact to ATP; sequence GGAGVGKT.

Belongs to the ATPase alpha/beta chains family. In terms of assembly, F-type ATPases have 2 components, CF(1) - the catalytic core - and CF(0) - the membrane proton channel. CF(1) has five subunits: alpha(3), beta(3), gamma(1), delta(1), epsilon(1). CF(0) has four main subunits: a(1), b(1), b'(1) and c(9-12).

Its subcellular location is the plastid. The protein localises to the chloroplast thylakoid membrane. It catalyses the reaction ATP + H2O + 4 H(+)(in) = ADP + phosphate + 5 H(+)(out). Functionally, produces ATP from ADP in the presence of a proton gradient across the membrane. The catalytic sites are hosted primarily by the beta subunits. The sequence is that of ATP synthase subunit beta, chloroplastic from Gossypium barbadense (Sea Island cotton).